Reading from the N-terminus, the 118-residue chain is Holin-like protein CidA 2 (118 aa).

A run of 4 helical transmembrane segments spans residues 5–27, 31–50, 62–84, and 88–110; these read MLLLQVGVLYVFSLVGTWIQGVF, MPGSLIGMLMLFLLLSTRIL, LLVFLPLFLIPSTTGLMEYESFL, and GSIIFLLVVISTVVTLIVSGYIS.

This sequence belongs to the CidA/LrgA family. CidA subfamily.

The protein localises to the cell membrane. Functionally, increases the activity of extracellular murein hydrolases possibly by mediating their export via hole formation. Inhibited by the antiholin-like proteins LrgAB. In an unstressed cell, the LrgAB products probably inhibit the function of the CidA protein. When a cell is stressed by the addition of antibiotics or by other factors in the environment, CidA possibly oligomerizes within the bacterial cell membrane, creating lesions that disrupt the proton motive force, which in turn results in loss of cell viability. These lesions are also hypothesized to regulate the subsequent cell lysis by either allowing the murein hydrolases access to the cell wall substrate and/or regulating their activity by a possible change in the cell wall pH that results from loss of membrane potential. The protein is Holin-like protein CidA 2 (cidA2) of Bacillus anthracis.